The sequence spans 147 residues: Cytochrome c-type biogenesis protein CcmE (147 aa).

The Cytoplasmic portion of the chain corresponds to 1–9 (MKSLKKKRR). A helical; Signal-anchor for type II membrane protein membrane pass occupies residues 10–30 (IQILVAAAVALVLAVGLIGYG). Residues 31-147 (FRDGINLYRS…EQGVYQEPNS (117 aa)) are Periplasmic-facing. Positions 123 and 127 each coordinate heme.

This sequence belongs to the CcmE/CycJ family.

It is found in the cell inner membrane. Heme chaperone required for the biogenesis of c-type cytochromes. Transiently binds heme delivered by CcmC and transfers the heme to apo-cytochromes in a process facilitated by CcmF and CcmH. This is Cytochrome c-type biogenesis protein CcmE from Paracoccus denitrificans (strain Pd 1222).